Reading from the N-terminus, the 106-residue chain is Small ribosomal subunit protein uS10 (106 aa).

This sequence belongs to the universal ribosomal protein uS10 family. Part of the 30S ribosomal subunit.

Its function is as follows. Involved in the binding of tRNA to the ribosomes. The sequence is that of Small ribosomal subunit protein uS10 from Prochlorococcus marinus subsp. pastoris (strain CCMP1986 / NIES-2087 / MED4).